Reading from the N-terminus, the 368-residue chain is Metacaspase-6 (368 aa).

Active-site residues include His-86 and Cys-139. Cys-139 is subject to S-nitrosocysteine. A disordered region spans residues 153–174 (GESTKKKKDSGDSSTINKETEA).

Belongs to the peptidase C14B family. Post-translationally, proteolytically processed; by an autocatalytic mechanism. As to expression, expressed in roots and flower buds.

This is Metacaspase-6 (AMC6) from Arabidopsis thaliana (Mouse-ear cress).